Consider the following 705-residue polypeptide: MNSLFASTARGLEELLKNELEGLGAESCQIVQGGVHYQVSDRLMYQSLMWSRLASRILLPLTECAVYSDLDLYLGVQAIDWPAMFSSDKTFAVHFSGLNEVIRNSQYGALKVKDAIVDSFTRKNLPRPNVDREQPDIRVNVWLNKDTASIALDLSGEGLHQRGYRQQTGQAPLKENLAAAIVLRSGWQSGTPLVDPMCGSGTLLIEAAMIASDRAPGLQRKHWGFTGWSKFDPSLWSDVTREAHERARQGIAQTSSRFFGYDNDARVIDRARINARNAGLAELIGFTTQDVLKLTNPLAQGPVGTVLSNPPYGERLDSEPALIALHGQLGRIMKTHFGGWNLSLFSASPELLSCLQLRAERQFKAKNGPLDCVQKNYQLAENPTGAPAGQLAEDYANRLRKNVKKLDKWARQEGIQCYRVYDADLPDYNVAVDRYGDWVVIQEYAAPKTIDPAKARQRLFDVISATLSVLDLPANKLVLKTREKQKGKSQYQKLGEKGDFFEVAEYNAKLWVNLTDYLDTGVFLDHRIARKMLGQMSKGKDFLNLFAYTGSASVHAGLGGARTTTTIDMSRTYLEWAERNMRLNGLSGRQHRLMQADCLSWLRDADEQFDLIFIDPPTFSNSKRMDESFDVQRDHLDLMKDLKRLLRKNGTVMFSNNKRGFKMDFAGMEALGLVANEITTKTQSQDFARNRQIHNCWLITHAGKE.

The region spanning Leu43 to Leu154 is the THUMP domain.

This sequence belongs to the methyltransferase superfamily. RlmKL family.

The protein localises to the cytoplasm. The enzyme catalyses guanosine(2445) in 23S rRNA + S-adenosyl-L-methionine = N(2)-methylguanosine(2445) in 23S rRNA + S-adenosyl-L-homocysteine + H(+). It carries out the reaction guanosine(2069) in 23S rRNA + S-adenosyl-L-methionine = N(2)-methylguanosine(2069) in 23S rRNA + S-adenosyl-L-homocysteine + H(+). Functionally, specifically methylates the guanine in position 2445 (m2G2445) and the guanine in position 2069 (m7G2069) of 23S rRNA. This chain is Ribosomal RNA large subunit methyltransferase K/L, found in Erwinia tasmaniensis (strain DSM 17950 / CFBP 7177 / CIP 109463 / NCPPB 4357 / Et1/99).